Reading from the N-terminus, the 172-residue chain is Propanediol dehydratase small subunit (172 aa).

It belongs to the diol/glycerol dehydratase small subunit family. The propanediol dehydratase enzyme is a heterotrimeric complex composed of a large (PduC), a medium (PduD) and a small (PduE) subunit. Adenosylcob(III)alamin serves as cofactor.

The protein localises to the bacterial microcompartment. The catalysed reaction is propane-1,2-diol = propanal + H2O. It functions in the pathway polyol metabolism; 1,2-propanediol degradation. Functionally, part of the PduCDE complex that catalyzes the dehydration of 1,2-propanediol (1,2-PD) to propionaldehyde. Localized in the bacterial microcompartment (BMC) dedicated to 1,2-PD degradation. Its function is as follows. Expression of a cosmid containing the full 21-gene pdu operon in E.coli allows E.coli to grow on 1,2-propanediol (1,2-PD) with the appearance of BMCs in its cytoplasm. In terms of biological role, the 1,2-PD-specific bacterial microcompartment (BMC) concentrates low levels of 1,2-PD catabolic enzymes, concentrates volatile reaction intermediates thus enhancing pathway flux and keeps the level of toxic, mutagenic propionaldehyde low. This is Propanediol dehydratase small subunit from Citrobacter freundii.